A 360-amino-acid polypeptide reads, in one-letter code: Phospho-N-acetylmuramoyl-pentapeptide-transferase (360 aa).

A run of 10 helical transmembrane segments spans residues 21–41, 73–93, 94–114, 132–152, 168–188, 199–219, 239–259, 263–283, 288–308, and 338–358; these read YITVRAILTLLTALFISLWIG, TMGGVMILFSIGVSTLLWANL, ANPYIWVCLFVLFGYGAIGFV, WKYFWMSVVALVAILWLYWLG, IMPQLGLFYIVLSYFVIVGTG, GLAIMPTALVAGAFALIAWAT, VVVFCTAIVGASLGFLWFNTY, VFMGDVGSLALGGALGVVAIL, FLLVIMGGVFVVEALSVILQV, and VIIRFWIISLMLVLMGLVTLK.

This sequence belongs to the glycosyltransferase 4 family. MraY subfamily. Mg(2+) is required as a cofactor.

It localises to the cell inner membrane. It catalyses the reaction UDP-N-acetyl-alpha-D-muramoyl-L-alanyl-gamma-D-glutamyl-meso-2,6-diaminopimeloyl-D-alanyl-D-alanine + di-trans,octa-cis-undecaprenyl phosphate = di-trans,octa-cis-undecaprenyl diphospho-N-acetyl-alpha-D-muramoyl-L-alanyl-D-glutamyl-meso-2,6-diaminopimeloyl-D-alanyl-D-alanine + UMP. Its pathway is cell wall biogenesis; peptidoglycan biosynthesis. Its function is as follows. Catalyzes the initial step of the lipid cycle reactions in the biosynthesis of the cell wall peptidoglycan: transfers peptidoglycan precursor phospho-MurNAc-pentapeptide from UDP-MurNAc-pentapeptide onto the lipid carrier undecaprenyl phosphate, yielding undecaprenyl-pyrophosphoryl-MurNAc-pentapeptide, known as lipid I. This is Phospho-N-acetylmuramoyl-pentapeptide-transferase from Haemophilus influenzae (strain PittEE).